The following is a 171-amino-acid chain: 3-hydroxydecanoyl-[acyl-carrier-protein] dehydratase (171 aa).

His71 is a catalytic residue.

Belongs to the thioester dehydratase family. FabA subfamily. Homodimer.

The protein localises to the cytoplasm. The enzyme catalyses a (3R)-hydroxyacyl-[ACP] = a (2E)-enoyl-[ACP] + H2O. The catalysed reaction is (3R)-hydroxydecanoyl-[ACP] = (2E)-decenoyl-[ACP] + H2O. It catalyses the reaction (2E)-decenoyl-[ACP] = (3Z)-decenoyl-[ACP]. The protein operates within lipid metabolism; fatty acid biosynthesis. In terms of biological role, necessary for the introduction of cis unsaturation into fatty acids. Catalyzes the dehydration of (3R)-3-hydroxydecanoyl-ACP to E-(2)-decenoyl-ACP and then its isomerization to Z-(3)-decenoyl-ACP. Can catalyze the dehydratase reaction for beta-hydroxyacyl-ACPs with saturated chain lengths up to 16:0, being most active on intermediate chain length. This is 3-hydroxydecanoyl-[acyl-carrier-protein] dehydratase from Sinorhizobium fredii (strain NBRC 101917 / NGR234).